We begin with the raw amino-acid sequence, 922 residues long: Isoleucine--tRNA ligase (922 aa).

A 'HIGH' region motif is present at residues proline 57 to histidine 67. Glutamate 553 provides a ligand contact to L-isoleucyl-5'-AMP. The 'KMSKS' region signature appears at lysine 594 to serine 598. An ATP-binding site is contributed by lysine 597. The Zn(2+) site is built by cysteine 889, cysteine 892, cysteine 909, and cysteine 912.

The protein belongs to the class-I aminoacyl-tRNA synthetase family. IleS type 1 subfamily. As to quaternary structure, monomer. Zn(2+) is required as a cofactor.

It localises to the cytoplasm. It catalyses the reaction tRNA(Ile) + L-isoleucine + ATP = L-isoleucyl-tRNA(Ile) + AMP + diphosphate. Functionally, catalyzes the attachment of isoleucine to tRNA(Ile). As IleRS can inadvertently accommodate and process structurally similar amino acids such as valine, to avoid such errors it has two additional distinct tRNA(Ile)-dependent editing activities. One activity is designated as 'pretransfer' editing and involves the hydrolysis of activated Val-AMP. The other activity is designated 'posttransfer' editing and involves deacylation of mischarged Val-tRNA(Ile). The protein is Isoleucine--tRNA ligase of Bacillus licheniformis (strain ATCC 14580 / DSM 13 / JCM 2505 / CCUG 7422 / NBRC 12200 / NCIMB 9375 / NCTC 10341 / NRRL NRS-1264 / Gibson 46).